The following is a 621-amino-acid chain: Solute carrier family 2, facilitated glucose transporter member 12 (621 aa).

Topologically, residues 1-48 (MVPVENTEGPNLLNQKGTAVETEGSYRASGSRHPPWARGCGMFTFLSS) are cytoplasmic. A helical membrane pass occupies residues 49–69 (VTAAVSGLLVGYELGIISGAL). The Extracellular segment spans residues 70 to 84 (LQIKTLLTLSCHEQE). Residues 85-105 (MVVSSLLIGALLASLTGGVLI) form a helical membrane-spanning segment. Over 106–119 (DRYGRRTAIILSSC) the chain is Cytoplasmic. Residues 120–140 (LLGLGSLVLILSLSYTVLIVG) form a helical membrane-spanning segment. A topological domain (extracellular) is located at residue Arg-141. A helical transmembrane segment spans residues 142–162 (IAIGVSISLSSIATCVYIAEI). Topologically, residues 163-176 (APQHRRGLLVSLNE) are cytoplasmic. The chain crosses the membrane as a helical span at residues 177-197 (LMIVIGILSAYISNYAFANVF). Over 198–201 (HGWK) the chain is Extracellular. The chain crosses the membrane as a helical span at residues 202-222 (YMFGLVIPLGILQAIAMYFLP). Residues 223–282 (PSPRFLVMKGQEGAASKVLGRLRALSDATEELTVIKSSLKDEYQYSFWDLFRSKDNMRTR) lie on the Cytoplasmic side of the membrane. The chain crosses the membrane as a helical span at residues 283–303 (IMIGLTLVFFVQITGQPNILF). Topologically, residues 304–321 (YASTVLKSVGFQSNEAAS) are extracellular. Residues 322-342 (LASTGVGVVKVISTIPATLLV) traverse the membrane as a helical segment. Topologically, residues 343–349 (DHVGSKT) are cytoplasmic. The helical transmembrane segment at 350–370 (FLCIGSSVMAASLVTMGIVNL) threads the bilayer. The Extracellular portion of the chain corresponds to 371 to 470 (NIHMNFTNIC…PAFLKWLSLA (100 aa)). Residues Asn-375, Asn-387, Asn-400, and Asn-405 are each glycosylated (N-linked (GlcNAc...) asparagine). The helical transmembrane segment at 471–491 (SLLVYVAAFSIGLGPMPWLVL) threads the bilayer. Topologically, residues 492 to 502 (SEIFPGGIRGR) are cytoplasmic. The chain crosses the membrane as a helical span at residues 503–523 (AMALTSSMNWGINLLISLTFL). The Extracellular segment spans residues 524–532 (TVTDLIGLP). The helical transmembrane segment at 533–553 (WVCFIYTIMSLASLLFVVMFI) threads the bilayer. The Cytoplasmic portion of the chain corresponds to 554 to 621 (PETKGCSLEQ…GQSRQLSPEN (68 aa)).

The protein belongs to the major facilitator superfamily. Sugar transporter (TC 2.A.1.1) family. Glucose transporter subfamily.

Its subcellular location is the cell membrane. The protein resides in the endomembrane system. It is found in the cytoplasm. It localises to the perinuclear region. It carries out the reaction D-glucose(out) = D-glucose(in). Its function is as follows. Insulin-independent facilitative glucose transporter. The sequence is that of Solute carrier family 2, facilitated glucose transporter member 12 from Macaca fascicularis (Crab-eating macaque).